We begin with the raw amino-acid sequence, 1072 residues long: Carbamoyl phosphate synthase large chain (1072 aa).

The segment at 1–401 (MPKYKDISKV…SLLKAVRSLE (401 aa)) is carboxyphosphate synthetic domain. ATP is bound by residues arginine 129, arginine 169, glycine 175, glycine 176, lysine 208, leucine 210, glutamate 215, glycine 241, valine 242, histidine 243, glutamine 284, and glutamate 298. The 195-residue stretch at 133–327 (KRKMQEIGEP…IAKIAAKIAI (195 aa)) folds into the ATP-grasp 1 domain. The Mg(2+) site is built by glutamine 284, glutamate 298, and asparagine 300. Mn(2+)-binding residues include glutamine 284, glutamate 298, and asparagine 300. An oligomerization domain region spans residues 402–544 (IKAYGLRLDS…YIYSTYCEED (143 aa)). The tract at residues 545–929 (EVETHDIPKV…ALYKALEGAG (385 aa)) is carbamoyl phosphate synthetic domain. The ATP-grasp 2 domain occupies 671–861 (SKLLKELNIN…MVKLAVEVAL (191 aa)). Positions 707, 746, 748, 752, 777, 778, 779, 780, 820, and 832 each coordinate ATP. The Mg(2+) site is built by glutamine 820, glutamate 832, and asparagine 834. 3 residues coordinate Mn(2+): glutamine 820, glutamate 832, and asparagine 834. Residues 930–1072 (LKIPKKGKIL…QKDNVKNLVL (143 aa)) form the MGS-like domain. The allosteric domain stretch occupies residues 930–1072 (LKIPKKGKIL…QKDNVKNLVL (143 aa)).

It belongs to the CarB family. As to quaternary structure, composed of two chains; the small (or glutamine) chain promotes the hydrolysis of glutamine to ammonia, which is used by the large (or ammonia) chain to synthesize carbamoyl phosphate. Tetramer of heterodimers (alpha,beta)4. Mg(2+) is required as a cofactor. Mn(2+) serves as cofactor.

It carries out the reaction hydrogencarbonate + L-glutamine + 2 ATP + H2O = carbamoyl phosphate + L-glutamate + 2 ADP + phosphate + 2 H(+). The catalysed reaction is hydrogencarbonate + NH4(+) + 2 ATP = carbamoyl phosphate + 2 ADP + phosphate + 2 H(+). It participates in amino-acid biosynthesis; L-arginine biosynthesis; carbamoyl phosphate from bicarbonate: step 1/1. It functions in the pathway pyrimidine metabolism; UMP biosynthesis via de novo pathway; (S)-dihydroorotate from bicarbonate: step 1/3. In terms of biological role, large subunit of the glutamine-dependent carbamoyl phosphate synthetase (CPSase). CPSase catalyzes the formation of carbamoyl phosphate from the ammonia moiety of glutamine, carbonate, and phosphate donated by ATP, constituting the first step of 2 biosynthetic pathways, one leading to arginine and/or urea and the other to pyrimidine nucleotides. The large subunit (synthetase) binds the substrates ammonia (free or transferred from glutamine from the small subunit), hydrogencarbonate and ATP and carries out an ATP-coupled ligase reaction, activating hydrogencarbonate by forming carboxy phosphate which reacts with ammonia to form carbamoyl phosphate. The sequence is that of Carbamoyl phosphate synthase large chain from Caldanaerobacter subterraneus subsp. tengcongensis (strain DSM 15242 / JCM 11007 / NBRC 100824 / MB4) (Thermoanaerobacter tengcongensis).